The chain runs to 122 residues: Large ribosomal subunit protein bL12 (122 aa).

This sequence belongs to the bacterial ribosomal protein bL12 family. Homodimer. Part of the ribosomal stalk of the 50S ribosomal subunit. Forms a multimeric L10(L12)X complex, where L10 forms an elongated spine to which 2 to 4 L12 dimers bind in a sequential fashion. Binds GTP-bound translation factors.

Functionally, forms part of the ribosomal stalk which helps the ribosome interact with GTP-bound translation factors. Is thus essential for accurate translation. In Staphylococcus aureus (strain Newman), this protein is Large ribosomal subunit protein bL12.